Reading from the N-terminus, the 525-residue chain is G-protein regulator 1 (525 aa).

The 22-residue stretch at 424–445 folds into the GoLoco domain; sequence PVDMMDLIFSMSSRMDDQRTEL. Residues 488–525 are disordered; sequence HTMNRILKRSKKSKSSLDSTNSMQGDDTRSDDVTMTSK.

As to quaternary structure, interacts with gpr-1, lin-5 and GDP-bound goa-1.

The protein resides in the cytoplasm. It localises to the cell cortex. Its subcellular location is the cytoskeleton. It is found in the spindle. In terms of biological role, in the 1-cell embryo, probably together with gpr-2, controls nuclear rotation and spindle elongation during mitosis. Complex of gpr-1 and gpr-2, in association with lin-5, activates G-protein signaling to affect mitotic spindle force. Polarity determinants (par genes) may regulate lin-5/gpr-1/gpr-2/goa-1 locally to create the asymmetric forces that drive spindle movement. This chain is G-protein regulator 1 (gpr-1), found in Caenorhabditis elegans.